A 1408-amino-acid chain; its full sequence is DNA-directed RNA polymerase subunit beta' (1408 aa).

Residues cysteine 70, cysteine 72, cysteine 85, and cysteine 88 each coordinate Zn(2+). Mg(2+) contacts are provided by aspartate 460, aspartate 462, and aspartate 464. Zn(2+) contacts are provided by cysteine 822, cysteine 896, cysteine 903, and cysteine 906. Positions 1386–1408 are disordered; sequence DTGEAPPLSEEETGEIRNSGYAV.

This sequence belongs to the RNA polymerase beta' chain family. In terms of assembly, the RNAP catalytic core consists of 2 alpha, 1 beta, 1 beta' and 1 omega subunit. When a sigma factor is associated with the core the holoenzyme is formed, which can initiate transcription. It depends on Mg(2+) as a cofactor. Requires Zn(2+) as cofactor.

The catalysed reaction is RNA(n) + a ribonucleoside 5'-triphosphate = RNA(n+1) + diphosphate. Its function is as follows. DNA-dependent RNA polymerase catalyzes the transcription of DNA into RNA using the four ribonucleoside triphosphates as substrates. The chain is DNA-directed RNA polymerase subunit beta' from Nitrosospira multiformis (strain ATCC 25196 / NCIMB 11849 / C 71).